Consider the following 406-residue polypeptide: Probable endo-xylogalacturonan hydrolase A (406 aa).

A signal peptide spans 1–18 (MISLNSIFLLSLVGLSRA). The tract at residues 20–49 (PSRSETSPDRTIKPRAACTPTAGGSSSTDD) is disordered. PbH1 repeat units lie at residues 183 to 213 (TSNA…DIGA), 214 to 235 (STYV…AFKP), 237 to 257 (ANYV…SVGS), 266 to 289 (VQNV…KTYP), 299 to 320 (VKNA…QIQS), and 368 to 390 (TCDV…ILCG). Catalysis depends on aspartate 228, which acts as the Proton donor. Asparagine 244 is a glycosylation site (N-linked (GlcNAc...) asparagine). Histidine 251 is an active-site residue. Residues asparagine 273, asparagine 278, and asparagine 301 are each glycosylated (N-linked (GlcNAc...) asparagine).

The protein belongs to the glycosyl hydrolase 28 family.

The protein resides in the secreted. Its function is as follows. Pectinolytic enzyme involved in the degradation of xylogalacturonan (xga), a galacturonan backbone heavily substituted with xylose, and which is one important component of the hairy regions of pectin. Activity requires a galacturonic acid backbone substituted with xylose. In Aspergillus oryzae (strain ATCC 42149 / RIB 40) (Yellow koji mold), this protein is Probable endo-xylogalacturonan hydrolase A (xghA).